The sequence spans 99 residues: Putative pterin-4-alpha-carbinolamine dehydratase (99 aa).

The protein belongs to the pterin-4-alpha-carbinolamine dehydratase family.

The enzyme catalyses (4aS,6R)-4a-hydroxy-L-erythro-5,6,7,8-tetrahydrobiopterin = (6R)-L-erythro-6,7-dihydrobiopterin + H2O. The chain is Putative pterin-4-alpha-carbinolamine dehydratase from Saccharolobus islandicus (strain M.16.27) (Sulfolobus islandicus).